Here is a 386-residue protein sequence, read N- to C-terminus: Zinc finger protein 385A (386 aa).

Residues 74–98 (ISCNVCQIRFNSQSQAEAHYKGNRH) form a Matrin-type 1 zinc finger. The segment at 88 to 193 (QAEAHYKGNR…ASLPGGSKEE (106 aa)) is disordered. Positions 103 to 121 (KGIEAAKTRGREPSVRESG) are enriched in basic and acidic residues. A necessary for binding to ITPR1, CEBPA and p53/TP53 mRNAs region spans residues 145–351 (NGLGPAPGSP…AGSPLSLRPA (207 aa)). Ser-185 carries the phosphoserine modification. The Matrin-type 2 zinc-finger motif lies at 201–225 (LYCALCKVAVNSLSQLEAHNKGTKH). Residue Thr-248 is modified to Phosphothreonine. The Matrin-type 3 zinc finger occupies 261–285 (FHCEICNVKVNSEVQLKQHISSRRH). Positions 279 to 305 (HISSRRHRDGVAGKPNPLLSRHKKPRG) are disordered.

In terms of assembly, interacts with p53/TP53; the interaction is direct and enhances p53/TP53 transactivation functions on cell-cycle arrest target genes, resulting in growth arrest. Interacts with ELAVL1; the interaction is indirect, mRNA-dependent and may regulate p53/TP53 expression. Post-translationally, ubiquitinated upon prolonged exposure to genotoxic stress, which leads to proteasomal degradation of ZNF385A and releases p53/TP53 from cell-cycle arrest target gene promoters. In terms of tissue distribution, expressed in brain and testis (at protein level). In brain, the expression is located to olfactory bulb, cerebral cortex, hippocampus, satellite cells and Purkinje cells of the cerebellum molecular layer. Detected in bone marrow, white and brown adipose tissue, lung and at lower levels in the thymus.

It localises to the cytoplasm. Its subcellular location is the nucleus. It is found in the nucleolus. The protein resides in the cell projection. The protein localises to the dendrite. RNA-binding protein that affects the localization and the translation of a subset of mRNA. May play a role in adipogenesis through binding to the 3'-UTR of CEBPA mRNA and regulation of its translation. Targets ITPR1 mRNA to dendrites in Purkinje cells, and may regulate its activity-dependent translation. With ELAVL1, binds the 3'-UTR of p53/TP53 mRNAs to control their nuclear export induced by CDKN2A. Hence, may regulate p53/TP53 expression and mediate in part the CDKN2A anti-proliferative activity. May also bind CCNB1 mRNA. Alternatively, may also regulate p53/TP53 activity through direct protein-protein interaction. Interacts with p53/TP53 and promotes cell-cycle arrest over apoptosis enhancing preferentially the DNA binding and transactivation of p53/TP53 on cell-cycle arrest target genes over proapoptotic target genes. May also regulate the ubiquitination and stability of CDKN1A promoting DNA damage-induced cell cycle arrest. Also plays a role in megakaryocytes differentiation. This is Zinc finger protein 385A (Znf385a) from Mus musculus (Mouse).